The chain runs to 79 residues: Small ribosomal subunit protein bS21 (79 aa).

The tract at residues 59–79 (RKKMQREGLLPMKPKPVVGVR) is disordered.

The protein belongs to the bacterial ribosomal protein bS21 family.

The sequence is that of Small ribosomal subunit protein bS21 from Methylocella silvestris (strain DSM 15510 / CIP 108128 / LMG 27833 / NCIMB 13906 / BL2).